A 433-amino-acid polypeptide reads, in one-letter code: Serine--tRNA ligase (433 aa).

239–241 serves as a coordination point for L-serine; the sequence is TAE. Residue 270–272 coordinates ATP; that stretch reads RSE. Glutamate 293 serves as a coordination point for L-serine. Residue 357 to 360 coordinates ATP; the sequence is EISS. Serine 393 serves as a coordination point for L-serine.

It belongs to the class-II aminoacyl-tRNA synthetase family. Type-1 seryl-tRNA synthetase subfamily. In terms of assembly, homodimer. The tRNA molecule binds across the dimer.

The protein localises to the cytoplasm. It catalyses the reaction tRNA(Ser) + L-serine + ATP = L-seryl-tRNA(Ser) + AMP + diphosphate + H(+). The enzyme catalyses tRNA(Sec) + L-serine + ATP = L-seryl-tRNA(Sec) + AMP + diphosphate + H(+). Its pathway is aminoacyl-tRNA biosynthesis; selenocysteinyl-tRNA(Sec) biosynthesis; L-seryl-tRNA(Sec) from L-serine and tRNA(Sec): step 1/1. Catalyzes the attachment of serine to tRNA(Ser). Is also able to aminoacylate tRNA(Sec) with serine, to form the misacylated tRNA L-seryl-tRNA(Sec), which will be further converted into selenocysteinyl-tRNA(Sec). This chain is Serine--tRNA ligase, found in Sorangium cellulosum (strain So ce56) (Polyangium cellulosum (strain So ce56)).